The sequence spans 513 residues: Galactose-1-phosphate uridylyltransferase (513 aa).

The protein belongs to the galactose-1-phosphate uridylyltransferase type 2 family.

The protein resides in the cytoplasm. The enzyme catalyses alpha-D-galactose 1-phosphate + UDP-alpha-D-glucose = alpha-D-glucose 1-phosphate + UDP-alpha-D-galactose. Its pathway is carbohydrate metabolism; galactose metabolism. In Bacillus subtilis (strain 168), this protein is Galactose-1-phosphate uridylyltransferase (galT).